A 401-amino-acid polypeptide reads, in one-letter code: Glucose-6-phosphate isomerase (401 aa).

Catalysis depends on Glu261, which acts as the Proton donor. Catalysis depends on residues His282 and Lys392.

Belongs to the GPI family. As to quaternary structure, homodimer.

It localises to the cytoplasm. The enzyme catalyses alpha-D-glucose 6-phosphate = beta-D-fructose 6-phosphate. Its pathway is carbohydrate biosynthesis; gluconeogenesis. It participates in carbohydrate degradation; glycolysis; D-glyceraldehyde 3-phosphate and glycerone phosphate from D-glucose: step 2/4. Its activity is regulated as follows. Competively inhibited by 6-phosphogluconate and erythrose 4-phosphate. In terms of biological role, catalyzes the isomerization of glucose-6-P to fructose-6-P. This is Glucose-6-phosphate isomerase from Methanocaldococcus jannaschii (strain ATCC 43067 / DSM 2661 / JAL-1 / JCM 10045 / NBRC 100440) (Methanococcus jannaschii).